The primary structure comprises 465 residues: Serine carboxypeptidase 24 (465 aa).

The signal sequence occupies residues 1 to 24 (MARTHFIFLLLVALLSTTFPSSSS). N-linked (GlcNAc...) asparagine glycosylation is found at N54, N105, and N139. Cystine bridges form between C88/C349, C249/C260, and C285/C317. S181 is a catalytic residue. 3 N-linked (GlcNAc...) asparagine glycosylation sites follow: N250, N293, and N338. The propeptide at 287 to 316 (AAQQKKNTTGFFVRMKNTLLRRRLVSGYDP) is linker peptide. Active-site residues include D386 and H438.

This sequence belongs to the peptidase S10 family. Heterodimer. N-glycosylated. As to expression, expressed in shoots, leaves, cauline leaves, siliques and flowers. Expressed a low levels in roots and stems.

Its subcellular location is the secreted. It is found in the extracellular space. The catalysed reaction is Preferential release of a C-terminal arginine or lysine residue.. Completely inhibited by phenylmethylsulfonyl fluoride (PMSF) and partially by leupeptin. Active serine carboxypeptidase with broad substrate preference, including basic and hydrophilic groups. Processes a protein involved in an early event in the brassinosteroid signaling pathway. This Arabidopsis thaliana (Mouse-ear cress) protein is Serine carboxypeptidase 24 (SCPL24).